A 2272-amino-acid chain; its full sequence is MARFGEAVVVGRPGSGDGDSDQSRNRQGTPVPASGPAAAYKQSKAQRARTMALYNPIPVRQNCFTVNRSLFIFGEDNIVRKYAKKLIDWPPFEYMILATIIANCIVLALEQHLPEDDKTPMSRRLEKTEPYFIGIFCFEAGIKIVALGFIFHKGSYLRNGWNVMDFIVVLSGILATAGTHFNTHVDLRALRAVRVLRPLKLVSGIPSLQIVLKSIMKAMVPLLQIGLLLFFAILMFAIIGLEFYSGKLHRACFMNNSGILEGFDPPHPCGVQGCPAGYECKDWIGPNDGITQFDNILFAVLTVFQCITMEGWTTVLYNTNDALGATWNWLYFIPLIIIGSFFVLNLVLGVLSGEFAKERERVENRRAFMKLRRQQQIERELNGYRAWIDKAEEVMLAEENKNSGTSALEVLRRATIKRSRTEAMTRDSSDEHCVDISSVGTPLARASIKSTKVDGASYFRHKERLLRISIRHMVKSQVFYWIVLSVVALNTACVAIVHHNQPQWLTHLLYYAEFLFLGLFLLEMSLKMYGMGPRLYFHSSFNCFDFGVTVGSIFEVVWAIFRPGTSFGISVLRALRLLRIFKITKYWASLRNLVVSLMSSMKSIISLLFLLFLFIVVFALLGMQLFGGRFNFNDGTPSANFDTFPAAIMTVFQILTGEDWNEVMYNGIRSQGGVSSGMWSAIYFIVLTLFGNYTLLNVFLAIAVDNLANAQELTKDEQEEEEAFNQKHALQKAKEVSPMSAPNMPSIERDRRRRHHMSMWEPRSSHLRERRRRHHMSVWEQRTSQLRRHMQMSSQEALNKEEAPPMNPLNPLNPLSPLNPLNAHPSLYRRPRPIEGLALGLGLEKCEEERISRGGSLKGDIGGLTSALDNQRSPLSLGKREPPWLPRSCHGNCDPIQQEAGGGETVVTFEDRARHRQSQRRSRHRRVRTEGKDSASASRSRSASQERSLDEGVSVEGEKEHEPHSSHRSKEPTIHEEERTQDLRRTNSLMVPRGSGLVGALDEAETPLVQPQPELEVGKDAALTEQEAEGSSEQALLGDVQLDVGRGISQSEPDLSCMTANMDKATTESTSVTVAIPDVDPLVDSTVVNISNKTDGEASPLKEAETKEEEEEVEKKKKQKKEKRETGKAMVPHSSMFIFSTTNPIRRACHYIVNLRYFEMCILLVIAASSIALAAEDPVLTNSERNKVLRYFDYVFTGVFTFEMVIKMIDQGLILQDGSYFRDLWNILDFVVVVGALVAFALANALGTNKGRDIKTIKSLRVLRVLRPLKTIKRLPKLKAVFDCVVTSLKNVFNILIVYKLFMFIFAVIAVQLFKGKFFYCTDSSKDTEKECIGNYVDHEKNKMEVKGREWKRHEFHYDNIIWALLTLFTVSTGEGWPQVLQHSVDVTEEDRGPSRSNRMEMSIFYVVYFVVFPFFFVNIFVALIIITFQEQGDKMMEECSLEKNERACIDFAISAKPLTRYMPQNRHTFQYRVWHFVVSPSFEYTIMAMIALNTVVLMMKYYTAPCTYELALKYLNIAFTMVFSLECVLKVIAFGFLNYFRDTWNIFDFITVIGSITEIILTDSKLVNTSGFNMSFLKLFRAARLIKLLRQGYTIRILLWTFVQSFKALPYVCLLIAMLFFIYAIIGMQVFGNIKLDEESHINRHNNFRSFFGSLMLLFRSATGEAWQEIMLSCLGEKGCEPDTTAPSGQNESERCGTDLAYVYFVSFIFFCSFLMLNLFVAVIMDNFEYLTRDSSILGPHHLDEFVRVWAEYDRAACGRIHYTEMYEMLTLMSPPLGLGKRCPSKVAYKRLVLMNMPVAEDMTVHFTSTLMALIRTALDIKIAKGGADRQQLDSELQKETLAIWPHLSQKMLDLLVPMPKASDLTVGKIYAAMMIMDYYKQSKVKKQRQQLEEQKNAPMFQRMEPSSLPQEIIANAKALPYLQQDPVSGLSGRSGYPSMSPLSPQEIFQLACMDPADDGQFQEQQSLVVTDPSSMRRSFSTIRDKRSNSSWLEEFSMERSSENTYKSRRRSYHSSLRLSAHRLNSDSGHKSDTHRSGGRERGRSKERKHLLSPDVSRCNSEERGTQADWESPERRQSRSPSEGRSQTPNRQGTGSLSESSIPSISDTSTPRRSRRQLPPVPPKPRPLLSYSSLMRHTGGISPPPDGSEGGSPLASQALESNSACLTESSNSLHPQQGQHPSPQHYISEPYLALHEDSHASDCGEEETLTFEAAVATSLGRSNTIGSAPPLRHSWQMPNGHYRRRRWGAWAGMMCGAVSDLLSDTEEDDKC.

Residues 1–40 (MARFGEAVVVGRPGSGDGDSDQSRNRQGTPVPASGPAAAY) are disordered. At 1–90 (MARFGEAVVV…KYAKKLIDWP (90 aa)) the chain is on the cytoplasmic side. 2 positions are modified to phosphoserine: serine 15 and serine 20. Residues 77-355 (NIVRKYAKKL…LVLGVLSGEF (279 aa)) form an I repeat. Residues 91–109 (PFEYMILATIIANCIVLAL) form a helical membrane-spanning segment. The Extracellular segment spans residues 110-128 (EQHLPEDDKTPMSRRLEKT). The helical transmembrane segment at 129–147 (EPYFIGIFCFEAGIKIVAL) threads the bilayer. The Cytoplasmic portion of the chain corresponds to 148 to 159 (GFIFHKGSYLRN). The helical transmembrane segment at 160–174 (GWNVMDFIVVLSGIL) threads the bilayer. At 175 to 186 (ATAGTHFNTHVD) the chain is on the extracellular side. Residues 187–206 (LRALRAVRVLRPLKLVSGIP) traverse the membrane as a helical segment. At 207–224 (SLQIVLKSIMKAMVPLLQ) the chain is on the cytoplasmic side. A helical transmembrane segment spans residues 225 to 245 (IGLLLFFAILMFAIIGLEFYS). Topologically, residues 246-327 (GKLHRACFMN…NTNDALGATW (82 aa)) are extracellular. A glycan (N-linked (GlcNAc...) asparagine) is linked at asparagine 255. The chain crosses the membrane as a helical span at residues 328–351 (NWLYFIPLIIIGSFFVLNLVLGVL). At 352–477 (SGEFAKERER…ISIRHMVKSQ (126 aa)) the chain is on the cytoplasmic side. A binding to the beta subunit region spans residues 375 to 392 (QQIERELNGYRAWIDKAE). Aspartate 427 is a binding site for Ca(2+). Phosphoserine is present on serine 428. Positions 429, 431, 433, and 438 each coordinate Ca(2+). At threonine 441 the chain carries Phosphothreonine. The stretch at 463-707 (ERLLRISIRH…VFLAIAVDNL (245 aa)) is one II repeat. Residues 478-497 (VFYWIVLSVVALNTACVAIV) form a helical membrane-spanning segment. At 498 to 510 (HHNQPQWLTHLLY) the chain is on the extracellular side. A helical membrane pass occupies residues 511 to 530 (YAEFLFLGLFLLEMSLKMYG). Topologically, residues 531–539 (MGPRLYFHS) are cytoplasmic. Residues 540–558 (SFNCFDFGVTVGSIFEVVW) form a helical membrane-spanning segment. Residues 559–568 (AIFRPGTSFG) lie on the Extracellular side of the membrane. Residues 569 to 587 (ISVLRALRLLRIFKITKYW) form a helical membrane-spanning segment. The Cytoplasmic segment spans residues 588-606 (ASLRNLVVSLMSSMKSIIS). A helical membrane pass occupies residues 607 to 626 (LLFLLFLFIVVFALLGMQLF). Topologically, residues 627 to 679 (GGRFNFNDGTPSANFDTFPAAIMTVFQILTGEDWNEVMYNGIRSQGGVSSGMW) are extracellular. A helical membrane pass occupies residues 680–704 (SAIYFIVLTLFGNYTLLNVFLAIAV). The Cytoplasmic segment spans residues 705 to 1150 (DNLANAQELT…TTNPIRRACH (446 aa)). A disordered region spans residues 730-777 (LQKAKEVSPMSAPNMPSIERDRRRRHHMSMWEPRSSHLRERRRRHHMS). Serine 737, serine 746, serine 794, serine 816, and serine 856 each carry phosphoserine. Disordered stretches follow at residues 854 to 994 (GGSL…VPRG) and 1091 to 1127 (SNKT…RETG). Over residues 914 to 927 (RHRQSQRRSRHRRV) the composition is skewed to basic residues. Low complexity predominate over residues 934–946 (SASASRSRSASQE). Residue serine 948 is modified to Phosphoserine. 2 stretches are compositionally biased toward basic and acidic residues: residues 956–985 (EGEK…DLRR) and 1094–1105 (TDGEASPLKEAE). The residue at position 1099 (serine 1099) is a Phosphoserine. The III repeat unit spans residues 1143 to 1429 (NPIRRACHYI…IFVALIIITF (287 aa)). The helical transmembrane segment at 1151–1167 (YIVNLRYFEMCILLVIA) threads the bilayer. Residues 1168–1191 (ASSIALAAEDPVLTNSERNKVLRY) are Extracellular-facing. Residues 1192–1211 (FDYVFTGVFTFEMVIKMIDQ) traverse the membrane as a helical segment. The Cytoplasmic portion of the chain corresponds to 1212–1219 (GLILQDGS). The helical transmembrane segment at 1220-1242 (YFRDLWNILDFVVVVGALVAFAL) threads the bilayer. Topologically, residues 1243-1256 (ANALGTNKGRDIKT) are extracellular. Residues 1257 to 1274 (IKSLRVLRVLRPLKTIKR) form a helical membrane-spanning segment. The Cytoplasmic segment spans residues 1275 to 1293 (LPKLKAVFDCVVTSLKNVF). Residues 1294–1313 (NILIVYKLFMFIFAVIAVQL) traverse the membrane as a helical segment. The Extracellular portion of the chain corresponds to 1314–1400 (FKGKFFYCTD…DRGPSRSNRM (87 aa)). A helical membrane pass occupies residues 1401-1424 (EMSIFYVVYFVVFPFFFVNIFVAL). At 1425 to 1481 (IIITFQEQGDKMMEECSLEKNERACIDFAISAKPLTRYMPQNRHTFQYRVWHFVVSP) the chain is on the cytoplasmic side. Residues 1466 to 1729 (NRHTFQYRVW…LFVAVIMDNF (264 aa)) form an IV repeat. The chain crosses the membrane as a helical span at residues 1482-1500 (SFEYTIMAMIALNTVVLMM). Over 1501–1515 (KYYTAPCTYELALKY) the chain is Extracellular. The helical transmembrane segment at 1516 to 1535 (LNIAFTMVFSLECVLKVIAF) threads the bilayer. The Cytoplasmic portion of the chain corresponds to 1536 to 1543 (GFLNYFRD). Residues 1544-1562 (TWNIFDFITVIGSITEIIL) form a helical membrane-spanning segment. The Extracellular segment spans residues 1563–1573 (TDSKLVNTSGF). N-linked (GlcNAc...) asparagine glycosylation occurs at asparagine 1569. A helical membrane pass occupies residues 1574–1592 (NMSFLKLFRAARLIKLLRQ). The Cytoplasmic portion of the chain corresponds to 1593-1611 (GYTIRILLWTFVQSFKALP). The chain crosses the membrane as a helical span at residues 1612–1631 (YVCLLIAMLFFIYAIIGMQV). Residues 1632 to 1700 (FGNIKLDEES…QNESERCGTD (69 aa)) lie on the Extracellular side of the membrane. Asparagine 1692 is a glycosylation site (N-linked (GlcNAc...) asparagine). A helical transmembrane segment spans residues 1701–1726 (LAYVYFVSFIFFCSFLMLNLFVAVIM). The Cytoplasmic portion of the chain corresponds to 1727–2272 (DNFEYLTRDS…LSDTEEDDKC (546 aa)). In terms of domain architecture, EF-hand spans 1742-1777 (HHLDEFVRVWAEYDRAACGRIHYTEMYEMLTLMSPP). The Ca(2+) site is built by aspartate 1755, arginine 1761, and glutamate 1766. The disordered stretch occupies residues 2021–2186 (SAHRLNSDSG…QQGQHPSPQH (166 aa)). Positions 2025-2045 (LNSDSGHKSDTHRSGGRERGR) are enriched in basic and acidic residues. 2 positions are modified to phosphoserine: serine 2054 and serine 2073. Residues 2061 to 2078 (NSEERGTQADWESPERRQ) are compositionally biased toward basic and acidic residues. Over residues 2097-2112 (SLSESSIPSISDTSTP) the composition is skewed to low complexity. The span at 2155-2174 (LASQALESNSACLTESSNSL) shows a compositional bias: polar residues. The span at 2175–2186 (HPQQGQHPSPQH) shows a compositional bias: low complexity.

It belongs to the calcium channel alpha-1 subunit (TC 1.A.1.11) family. CACNA1E subfamily. Interacts with EFHC1. Voltage-dependent calcium channels are multisubunit complexes, consisting of alpha-1, alpha-2, beta and delta subunits in a 1:1:1:1 ratio. The channel activity is directed by the pore-forming and voltage-sensitive alpha-1 subunit. In many cases, this subunit is sufficient to generate voltage-sensitive calcium channel activity. The auxiliary subunits beta and alpha-2/delta linked by a disulfide bridge regulate the channel activity. In terms of tissue distribution, expressed in neuronal tissues, retina, spleen, and pancreatic islet cells.

It localises to the membrane. It catalyses the reaction Ca(2+)(in) = Ca(2+)(out). Voltage-sensitive calcium channels (VSCC) mediate the entry of calcium ions into excitable cells and are also involved in a variety of calcium-dependent processes, including muscle contraction, hormone or neurotransmitter release, gene expression, cell motility, cell division and cell death. The isoform alpha-1E gives rise to R-type calcium currents. R-type calcium channels belong to the 'high-voltage activated' (HVA) group and are blocked by nickel. They are however insensitive to dihydropyridines (DHP). Calcium channels containing alpha-1E subunit could be involved in the modulation of firing patterns of neurons which is important for information processing. This is Voltage-dependent R-type calcium channel subunit alpha-1E (Cacna1e) from Mus musculus (Mouse).